The following is a 179-amino-acid chain: Embryo-specific protein ATS3A (179 aa).

The N-terminal stretch at 1 to 22 (MLRLAIPLFLFALCSFTLFSSA) is a signal peptide. The 111-residue stretch at 48 to 158 (CSYTVIIKTS…NSVWYGFNVC (111 aa)) folds into the PLAT domain.

In terms of assembly, interacts with EULS3 (via N-terminus). Expressed in roots, rosette leaves, stems, cauline leaves and flowers.

The protein localises to the secreted. May play a role during embryo development. The protein is Embryo-specific protein ATS3A of Arabidopsis thaliana (Mouse-ear cress).